A 259-amino-acid chain; its full sequence is Protein FAM220A (259 aa).

2 disordered regions span residues 1 to 44 (MRDR…ADAP) and 131 to 154 (LGGG…RVSR). Residues 138 to 152 (TDGHRGQCPKGEPRV) show a composition bias toward basic and acidic residues.

Interacts with transcriptional activator STAT3; the interaction occurs in both the nucleus and the cytoplasm, is enhanced by IL6 and promotes STAT3 dephosphorylation, leading to negative regulation of STAT3 transcriptional activator activity. Can interact with both unphosphorylated and phosphorylated STAT3 but interacts preferentially with phosphorylated STAT3 in the nucleus. Interacts with protein phosphatase PTPN2/TC45; this promotes interaction of PTPN2 with STAT3, leading to dephosphorylation of STAT3 by PTPN2.

It is found in the nucleus. The protein localises to the cytoplasm. It localises to the cytoplasmic vesicle. The protein resides in the secretory vesicle. Its subcellular location is the acrosome. Promotes dephosphorylation of transcriptional activator STAT3 by interacting with both STAT3 and protein phosphatase PTPN2. This promotes interaction of PTPN2 with STAT3 and mediates STAT3 dephosphorylation by PTPN2, leading to negative regulation of STAT3 transcriptional activator activity. May be required for spermiogenesis or sperm function. This chain is Protein FAM220A, found in Homo sapiens (Human).